A 123-amino-acid polypeptide reads, in one-letter code: UPF0102 protein SPO0400 (123 aa).

Belongs to the UPF0102 family.

The chain is UPF0102 protein SPO0400 from Ruegeria pomeroyi (strain ATCC 700808 / DSM 15171 / DSS-3) (Silicibacter pomeroyi).